The sequence spans 220 residues: 7-cyano-7-deazaguanine synthase (220 aa).

10 to 20 (FSGGQDSTTCL) contributes to the ATP binding site. Zn(2+)-binding residues include cysteine 186, cysteine 195, cysteine 198, and cysteine 201.

Belongs to the QueC family. In terms of assembly, homodimer. Zn(2+) serves as cofactor.

The catalysed reaction is 7-carboxy-7-deazaguanine + NH4(+) + ATP = 7-cyano-7-deazaguanine + ADP + phosphate + H2O + H(+). It participates in purine metabolism; 7-cyano-7-deazaguanine biosynthesis. Its function is as follows. Catalyzes the ATP-dependent conversion of 7-carboxy-7-deazaguanine (CDG) to 7-cyano-7-deazaguanine (preQ(0)). The polypeptide is 7-cyano-7-deazaguanine synthase (Bacillus mycoides (strain KBAB4) (Bacillus weihenstephanensis)).